A 153-amino-acid polypeptide reads, in one-letter code: Troponin C (153 aa).

Position 1 is a blocked amino end (Ala) (Ala-1). 4 consecutive EF-hand domains span residues 10–45, 46–81, 86–121, and 122–153; these read EQVQ…LGQT, FEEK…FLVE, AMQE…LDDK, and LTED…MMTG. Residues Asp-59, Asp-61, Ser-63, Glu-65, Glu-70, Asp-99, Asp-110, Asp-135, Asp-137, Ser-139, Thr-141, and Glu-146 each contribute to the Ca(2+) site.

Belongs to the troponin C family.

Its function is as follows. Troponin is the central regulatory protein of striated muscle contraction. Tn consists of three components: Tn-I which is the inhibitor of actomyosin ATPase, Tn-T which contains the binding site for tropomyosin and Tn-C. The binding of calcium to Tn-C abolishes the inhibitory action of Tn on actin filaments. The chain is Troponin C from Tachypleus tridentatus (Japanese horseshoe crab).